Here is a 158-residue protein sequence, read N- to C-terminus: Cyclic pyranopterin monophosphate synthase (158 aa).

Residues 75-77 (LCH) and 113-114 (ME) each bind substrate. Asp128 is an active-site residue.

The protein belongs to the MoaC family. As to quaternary structure, homohexamer; trimer of dimers.

The catalysed reaction is (8S)-3',8-cyclo-7,8-dihydroguanosine 5'-triphosphate = cyclic pyranopterin phosphate + diphosphate. It participates in cofactor biosynthesis; molybdopterin biosynthesis. Functionally, catalyzes the conversion of (8S)-3',8-cyclo-7,8-dihydroguanosine 5'-triphosphate to cyclic pyranopterin monophosphate (cPMP). The protein is Cyclic pyranopterin monophosphate synthase of Mannheimia succiniciproducens (strain KCTC 0769BP / MBEL55E).